The primary structure comprises 565 residues: NAD-dependent malic enzyme (565 aa).

Catalysis depends on Tyr104, which acts as the Proton donor. Arg157 contacts NAD(+). Lys175 (proton acceptor) is an active-site residue. The a divalent metal cation site is built by Glu246, Asp247, and Asp270. 2 residues coordinate NAD(+): Asp270 and Asn418.

This sequence belongs to the malic enzymes family. As to quaternary structure, homotetramer. Mg(2+) serves as cofactor. The cofactor is Mn(2+).

The enzyme catalyses (S)-malate + NAD(+) = pyruvate + CO2 + NADH. It carries out the reaction oxaloacetate + H(+) = pyruvate + CO2. The chain is NAD-dependent malic enzyme from Escherichia coli O9:H4 (strain HS).